The following is a 115-amino-acid chain: U17-barytoxin-Tl1b (115 aa).

An N-terminal signal peptide occupies residues 1-20 (MKTIIVFLSLLVLATKFGDA). A propeptide spanning residues 21–74 (KEGVNQKQKKEVTQNEFREEYLNEMAAMSLVQQLEAIERALFENEAGRNSRQKR) is cleaved from the precursor. Disulfide bonds link C75–C89, C82–C94, and C88–C109.

This sequence belongs to the neurotoxin 14 (magi-1) family. 03 (ICK-30-40) subfamily. As to expression, expressed by the venom gland.

The protein localises to the secreted. Functionally, ion channel inhibitor. This chain is U17-barytoxin-Tl1b, found in Trittame loki (Brush-footed trapdoor spider).